Reading from the N-terminus, the 223-residue chain is Holliday junction branch migration complex subunit RuvA (223 aa).

The tract at residues Met1–Pro64 is domain I. The tract at residues Thr65–Thr143 is domain II. Residues Val144–Pro169 are flexible linker. The domain III stretch occupies residues Ser170–Glu223.

The protein belongs to the RuvA family. Homotetramer. Forms an RuvA(8)-RuvB(12)-Holliday junction (HJ) complex. HJ DNA is sandwiched between 2 RuvA tetramers; dsDNA enters through RuvA and exits via RuvB. An RuvB hexamer assembles on each DNA strand where it exits the tetramer. Each RuvB hexamer is contacted by two RuvA subunits (via domain III) on 2 adjacent RuvB subunits; this complex drives branch migration. In the full resolvosome a probable DNA-RuvA(4)-RuvB(12)-RuvC(2) complex forms which resolves the HJ.

The protein localises to the cytoplasm. In terms of biological role, the RuvA-RuvB-RuvC complex processes Holliday junction (HJ) DNA during genetic recombination and DNA repair, while the RuvA-RuvB complex plays an important role in the rescue of blocked DNA replication forks via replication fork reversal (RFR). RuvA specifically binds to HJ cruciform DNA, conferring on it an open structure. The RuvB hexamer acts as an ATP-dependent pump, pulling dsDNA into and through the RuvAB complex. HJ branch migration allows RuvC to scan DNA until it finds its consensus sequence, where it cleaves and resolves the cruciform DNA. The protein is Holliday junction branch migration complex subunit RuvA of Paracoccus denitrificans (strain Pd 1222).